The following is a 66-amino-acid chain: Large ribosomal subunit protein bL31 (66 aa).

Zn(2+) contacts are provided by cysteine 16, cysteine 18, cysteine 36, and cysteine 39.

It belongs to the bacterial ribosomal protein bL31 family. Type A subfamily. Part of the 50S ribosomal subunit. Zn(2+) serves as cofactor.

Binds the 23S rRNA. The polypeptide is Large ribosomal subunit protein bL31 (Geobacillus thermodenitrificans (strain NG80-2)).